Reading from the N-terminus, the 321-residue chain is MMMEQECVDDSIRPRTLDDFIGQEDLRANLRVYLQAARGRGQAMDHTLFYGNPGLGKTTLAQIMASEMGVNMVCTSGPVLERSGDLAAILTNLGKGDLLFVDEIHRMPVAVEEVLYPAMEDFKLDLVIGQGPGARTVKIDLEPFTLVGATTRIGLLSSPLRDRFGIISRLEFYTPAELACIVKRTAGIMGVSLTEDGAVEIGRRSRGTPRIANRLLRRVRDFASVQNSAAVTAALASDALARMDVDELGLDQMDRKLLSVLIEHFAGGPVGVKTLAVACSEEVRTIEDIYEPYLIQCGFLKRTPRGRMATAKAYRHMNLLA.

The large ATPase domain (RuvB-L) stretch occupies residues Met-1–Tyr-173. ATP-binding positions include Ile-12, Arg-13, Gly-54, Lys-57, Thr-58, Thr-59, Glu-120–Phe-122, Arg-163, Tyr-173, and Arg-210. Thr-58 is a Mg(2+) binding site. Residues Thr-174–Asp-244 form a small ATPAse domain (RuvB-S) region. Residues Glu-247–Ala-321 are head domain (RuvB-H). Positions 302 and 307 each coordinate DNA.

The protein belongs to the RuvB family. As to quaternary structure, homohexamer. Forms an RuvA(8)-RuvB(12)-Holliday junction (HJ) complex. HJ DNA is sandwiched between 2 RuvA tetramers; dsDNA enters through RuvA and exits via RuvB. An RuvB hexamer assembles on each DNA strand where it exits the tetramer. Each RuvB hexamer is contacted by two RuvA subunits (via domain III) on 2 adjacent RuvB subunits; this complex drives branch migration. In the full resolvosome a probable DNA-RuvA(4)-RuvB(12)-RuvC(2) complex forms which resolves the HJ.

Its subcellular location is the cytoplasm. It carries out the reaction ATP + H2O = ADP + phosphate + H(+). Its function is as follows. The RuvA-RuvB-RuvC complex processes Holliday junction (HJ) DNA during genetic recombination and DNA repair, while the RuvA-RuvB complex plays an important role in the rescue of blocked DNA replication forks via replication fork reversal (RFR). RuvA specifically binds to HJ cruciform DNA, conferring on it an open structure. The RuvB hexamer acts as an ATP-dependent pump, pulling dsDNA into and through the RuvAB complex. RuvB forms 2 homohexamers on either side of HJ DNA bound by 1 or 2 RuvA tetramers; 4 subunits per hexamer contact DNA at a time. Coordinated motions by a converter formed by DNA-disengaged RuvB subunits stimulates ATP hydrolysis and nucleotide exchange. Immobilization of the converter enables RuvB to convert the ATP-contained energy into a lever motion, pulling 2 nucleotides of DNA out of the RuvA tetramer per ATP hydrolyzed, thus driving DNA branch migration. The RuvB motors rotate together with the DNA substrate, which together with the progressing nucleotide cycle form the mechanistic basis for DNA recombination by continuous HJ branch migration. Branch migration allows RuvC to scan DNA until it finds its consensus sequence, where it cleaves and resolves cruciform DNA. The polypeptide is Holliday junction branch migration complex subunit RuvB (Oleidesulfovibrio alaskensis (strain ATCC BAA-1058 / DSM 17464 / G20) (Desulfovibrio alaskensis)).